A 131-amino-acid polypeptide reads, in one-letter code: Nuclear envelope phosphatase-regulatory subunit 1 homolog (131 aa).

2 helical membrane passes run 33-53 (LLAV…WYWL) and 68-88 (WIHP…ILGI).

Belongs to the CNEP1R1 family.

The protein localises to the nucleus membrane. It is found in the cytoplasm. May form with the serine/threonine protein phosphatase l(1)G0269 an active complex dephosphorylating and activating lipin-like phosphatases. Lipins are phosphatidate phosphatases that catalyze the conversion of phosphatidic acid to diacylglycerol and control the metabolism of fatty acids at different levels. The sequence is that of Nuclear envelope phosphatase-regulatory subunit 1 homolog from Drosophila melanogaster (Fruit fly).